The primary structure comprises 411 residues: Glutamate dehydrogenase 1, mitochondrial (411 aa).

Residues 1–18 (MNALAATSRNFKQAAKLL) constitute a mitochondrion transit peptide. The active site involves Lys-102.

Belongs to the Glu/Leu/Phe/Val dehydrogenases family.

The protein localises to the mitochondrion. The catalysed reaction is L-glutamate + NAD(+) + H2O = 2-oxoglutarate + NH4(+) + NADH + H(+). The enzyme catalyses L-glutamate + NADP(+) + H2O = 2-oxoglutarate + NH4(+) + NADPH + H(+). In Oryza sativa subsp. indica (Rice), this protein is Glutamate dehydrogenase 1, mitochondrial (GDH1).